We begin with the raw amino-acid sequence, 130 residues long: Small ribosomal subunit protein uS8 (130 aa).

It belongs to the universal ribosomal protein uS8 family. As to quaternary structure, part of the 30S ribosomal subunit. Contacts proteins S5 and S12.

Its function is as follows. One of the primary rRNA binding proteins, it binds directly to 16S rRNA central domain where it helps coordinate assembly of the platform of the 30S subunit. This Enterobacter sp. (strain 638) protein is Small ribosomal subunit protein uS8.